The sequence spans 955 residues: Glutamyl aminopeptidase (955 aa).

Over 1–17 (MDIEDKTSKMHCMKGKH) the chain is Cytoplasmic. Residues 18-38 (VVIICGVVIAVGLILGLGLGL) form a helical; Signal-anchor for type II membrane protein membrane-spanning segment. At 39 to 955 (GLDTKACNPP…LENSEHSNFA (917 aa)) the chain is on the extracellular side. 2 N-linked (GlcNAc...) asparagine glycosylation sites follow: asparagine 118 and asparagine 192. A substrate-binding site is contributed by glutamate 218. N-linked (GlcNAc...) asparagine glycans are attached at residues asparagine 319 and asparagine 335. Residue 352–356 (GAMEN) coordinates substrate. Histidine 388 serves as a coordination point for Zn(2+). Catalysis depends on glutamate 389, which acts as the Proton acceptor. Zn(2+) contacts are provided by histidine 392 and glutamate 411. N-linked (GlcNAc...) asparagine glycosylation is found at asparagine 458, asparagine 547, asparagine 584, asparagine 592, asparagine 674, asparagine 759, asparagine 823, and asparagine 836. Arginine 882 serves as a coordination point for substrate.

This sequence belongs to the peptidase M1 family. In terms of assembly, homodimer; disulfide-linked. It depends on Zn(2+) as a cofactor. N-glycosylated. Glycosylation counts for an increased mass of about 32% of the protein mass (about 48 kDa).

The protein resides in the cell membrane. The catalysed reaction is Release of N-terminal glutamate (and to a lesser extent aspartate) from a peptide.. Substrate specificity is modulated by calcium which enhances the enzymatic activity for cleavage of acidic residues while reducing its activity with neutral and basic residues. Hydrolytic activity is inhibited by the aminopeptidase inhibitor (Leu and acidic inhibitor) amastatin, but not by bestatin (aminopeptidase inhibitor Leu inhibitor), leupeptin, pepstatin A and PMSF. Its hydrolytic activity is also strongly reduced by zinc ions, with a complete inhibition at 0.5 mM, and moderately inhibited by cobalt and copper ions. Its function is as follows. Venom protein that cleaves N-terminal acidic residues from peptides with high potency in presence of calcium. It may have several roles in venom including alteration of blood pressure by cleaving circulating angiotensin-2, general degradation of host tissue, increase of permeability to other venom components, and/or processing of other toxins in the venom. The chain is Glutamyl aminopeptidase from Bitis rhinoceros (West African gaboon viper).